A 143-amino-acid polypeptide reads, in one-letter code: Protein SLC31A2 (143 aa).

Topologically, residues Met-1–Ser-22 are extracellular. A helical transmembrane segment spans residues Pro-23 to Ile-43. Residues Lys-44 to His-93 lie on the Cytoplasmic side of the membrane. Ser-77 is subject to Phosphoserine. A helical membrane pass occupies residues Phe-94–Val-114. Residues Met-115–Thr-119 lie on the Extracellular side of the membrane. Residues Trp-120–Leu-140 traverse the membrane as a helical segment. Residues Ser-141–Ala-143 lie on the Cytoplasmic side of the membrane.

It belongs to the copper transporter (Ctr) (TC 1.A.56) family. SLC31A subfamily. In terms of assembly, oligomer. Interacts with SLC31A1; this interaction stabilizes SLC31A2 and protects it from ubiquitination and the subsequent degradation. Ubiquitinated; ubiquitination and the subsequent proteasomal degradation are prevent by SLC31A1 that stabilizes it. As to expression, ubiquitous with high expression in placenta and heart.

The protein resides in the membrane. It is found in the cytoplasmic vesicle membrane. The protein localises to the late endosome membrane. It localises to the lysosome membrane. In terms of biological role, does not function as a copper(1+) importer in vivo. However, in vitro functions as a low-affinity copper(1+) importer. Regulator of SLC31A1 which facilitates the cleavage of the SLC31A1 ecto-domain or which stabilizes the truncated form of SLC31A1 (Truncated CTR1 form), thereby drives the SLC31A1 truncated form-dependent endosomal copper export and modulates the copper and cisplatin accumulation via SLC31A1. The chain is Protein SLC31A2 from Homo sapiens (Human).